Here is a 216-residue protein sequence, read N- to C-terminus: Redox-sensing transcriptional repressor Rex (216 aa).

Residues 20 to 59 constitute a DNA-binding region (H-T-H motif); the sequence is QYYRLFKSLVEENVTRTNSQLISEKIGVDAATIRRDFSLF. 94–99 contributes to the NAD(+) binding site; the sequence is GVGNLG.

Belongs to the transcriptional regulatory Rex family. Homodimer.

The protein localises to the cytoplasm. Functionally, modulates transcription in response to changes in cellular NADH/NAD(+) redox state. The sequence is that of Redox-sensing transcriptional repressor Rex from Lactococcus lactis subsp. cremoris (Streptococcus cremoris).